The sequence spans 255 residues: 5-oxoprolinase subunit A 1 (255 aa).

This sequence belongs to the LamB/PxpA family. Forms a complex composed of PxpA, PxpB and PxpC.

The catalysed reaction is 5-oxo-L-proline + ATP + 2 H2O = L-glutamate + ADP + phosphate + H(+). Catalyzes the cleavage of 5-oxoproline to form L-glutamate coupled to the hydrolysis of ATP to ADP and inorganic phosphate. In Bradyrhizobium diazoefficiens (strain JCM 10833 / BCRC 13528 / IAM 13628 / NBRC 14792 / USDA 110), this protein is 5-oxoprolinase subunit A 1.